Consider the following 380-residue polypeptide: Chorismate synthase (380 aa).

Arginine 47 lines the NADP(+) pocket. Residues 124-126, glycine 288, 303-307, and arginine 329 each bind FMN; these read RSS and KPTST.

This sequence belongs to the chorismate synthase family. As to quaternary structure, homotetramer. Requires FMNH2 as cofactor.

It catalyses the reaction 5-O-(1-carboxyvinyl)-3-phosphoshikimate = chorismate + phosphate. It functions in the pathway metabolic intermediate biosynthesis; chorismate biosynthesis; chorismate from D-erythrose 4-phosphate and phosphoenolpyruvate: step 7/7. Functionally, catalyzes the anti-1,4-elimination of the C-3 phosphate and the C-6 proR hydrogen from 5-enolpyruvylshikimate-3-phosphate (EPSP) to yield chorismate, which is the branch point compound that serves as the starting substrate for the three terminal pathways of aromatic amino acid biosynthesis. This reaction introduces a second double bond into the aromatic ring system. This Leptospira borgpetersenii serovar Hardjo-bovis (strain JB197) protein is Chorismate synthase.